Here is a 1359-residue protein sequence, read N- to C-terminus: DNA-directed RNA polymerase subunit beta (1359 aa).

The protein belongs to the RNA polymerase beta chain family. In terms of assembly, the RNAP catalytic core consists of 2 alpha, 1 beta, 1 beta' and 1 omega subunit. When a sigma factor is associated with the core the holoenzyme is formed, which can initiate transcription.

The catalysed reaction is RNA(n) + a ribonucleoside 5'-triphosphate = RNA(n+1) + diphosphate. DNA-dependent RNA polymerase catalyzes the transcription of DNA into RNA using the four ribonucleoside triphosphates as substrates. The polypeptide is DNA-directed RNA polymerase subunit beta (Nitrosococcus oceani (strain ATCC 19707 / BCRC 17464 / JCM 30415 / NCIMB 11848 / C-107)).